Consider the following 353-residue polypeptide: Uroporphyrinogen decarboxylase (353 aa).

Substrate is bound by residues 26–30, Asp75, Tyr161, Ser216, and His332; that span reads RQAGR.

Belongs to the uroporphyrinogen decarboxylase family. As to quaternary structure, homodimer.

The protein resides in the cytoplasm. It carries out the reaction uroporphyrinogen III + 4 H(+) = coproporphyrinogen III + 4 CO2. It participates in porphyrin-containing compound metabolism; protoporphyrin-IX biosynthesis; coproporphyrinogen-III from 5-aminolevulinate: step 4/4. Its function is as follows. Catalyzes the decarboxylation of four acetate groups of uroporphyrinogen-III to yield coproporphyrinogen-III. The chain is Uroporphyrinogen decarboxylase from Gluconacetobacter diazotrophicus (strain ATCC 49037 / DSM 5601 / CCUG 37298 / CIP 103539 / LMG 7603 / PAl5).